The chain runs to 378 residues: Protein KlaB (378 aa).

This sequence belongs to the TelA family.

Functionally, belongs to the kla operon, which is associated with cryptic tellurite resistance, and IncW plasmid fertility inhibition. The sequence is that of Protein KlaB (klaB) from Escherichia coli.